The primary structure comprises 158 residues: SsrA-binding protein (158 aa).

The disordered stretch occupies residues 133–158 (KIHDKRETEAKRDWNRQKQRLLKDNA). The segment covering 136–158 (DKRETEAKRDWNRQKQRLLKDNA) has biased composition (basic and acidic residues).

This sequence belongs to the SmpB family.

It is found in the cytoplasm. In terms of biological role, required for rescue of stalled ribosomes mediated by trans-translation. Binds to transfer-messenger RNA (tmRNA), required for stable association of tmRNA with ribosomes. tmRNA and SmpB together mimic tRNA shape, replacing the anticodon stem-loop with SmpB. tmRNA is encoded by the ssrA gene; the 2 termini fold to resemble tRNA(Ala) and it encodes a 'tag peptide', a short internal open reading frame. During trans-translation Ala-aminoacylated tmRNA acts like a tRNA, entering the A-site of stalled ribosomes, displacing the stalled mRNA. The ribosome then switches to translate the ORF on the tmRNA; the nascent peptide is terminated with the 'tag peptide' encoded by the tmRNA and targeted for degradation. The ribosome is freed to recommence translation, which seems to be the essential function of trans-translation. The chain is SsrA-binding protein from Ruegeria pomeroyi (strain ATCC 700808 / DSM 15171 / DSS-3) (Silicibacter pomeroyi).